The chain runs to 118 residues: Large ribosomal subunit protein bL19 (118 aa).

The protein belongs to the bacterial ribosomal protein bL19 family.

Functionally, this protein is located at the 30S-50S ribosomal subunit interface and may play a role in the structure and function of the aminoacyl-tRNA binding site. The protein is Large ribosomal subunit protein bL19 of Coprothermobacter proteolyticus (strain ATCC 35245 / DSM 5265 / OCM 4 / BT).